We begin with the raw amino-acid sequence, 507 residues long: Monocarboxylate transporter 9 (507 aa).

Residues 1–12 are Extracellular-facing; sequence MVYRKPPDGGWG. Residues 13–33 traverse the membrane as a helical segment; that stretch reads WVIVIVSFFTQFLCYGSPLAV. The Cytoplasmic portion of the chain corresponds to 34-52; the sequence is GVLYLEWLDAFGEGKGKTA. Residues 53 to 73 traverse the membrane as a helical segment; it reads WVGSLANGIGLLASPVCSICV. Over 74–79 the chain is Extracellular; the sequence is SSFGAR. Residues 80–100 traverse the membrane as a helical segment; sequence PVAIFSGFMVAGGLMMSSFAP. Residues 101-102 are Cytoplasmic-facing; the sequence is NI. A helical membrane pass occupies residues 103–123; that stretch reads YFLYLSYGIVVGLGCGLLYNA. Residues 124–136 lie on the Extracellular side of the membrane; the sequence is TVTITCQYFDKRR. Residues 137–157 traverse the membrane as a helical segment; that stretch reads GLALGLISTGSSVGLFIYAAL. The Cytoplasmic portion of the chain corresponds to 158–163; that stretch reads QRELIE. A helical transmembrane segment spans residues 164–184; it reads LYGLDGCLLIVGALSLNILAC. The Extracellular portion of the chain corresponds to 185 to 302; that stretch reads GSLMRPLESS…EETVVLFKNR (118 aa). Residues 303 to 323 form a helical membrane-spanning segment; sequence VFSALFFAILLFDIGGFPPSL. At 324–340 the chain is on the cytoplasmic side; that stretch reads LMEDIARSANINEEDYH. Residues 341–361 traverse the membrane as a helical segment; the sequence is MPLVSIIGIMTAIGKLILGIL. The Extracellular segment spans residues 362-369; it reads ADFKWVNT. The helical transmembrane segment at 370 to 390 threads the bilayer; it reads LYLYVLTLLMMGAALLAIPFA. Topologically, residues 391–395 are cytoplasmic; the sequence is RSYFT. The helical transmembrane segment at 396–416 threads the bilayer; it reads LAVLSGILGFLTGNWSIFPYV. Residues 417 to 430 are Extracellular-facing; the sequence is TTKTVGIEKLTHAY. Residues 431–451 form a helical membrane-spanning segment; that stretch reads GILMFFAGLGNSLGPPIVGWF. At 452–460 the chain is on the cytoplasmic side; sequence YDWTQEYDT. Residues 461–481 traverse the membrane as a helical segment; the sequence is AFYFSGFCVLLGGFLLLLAAL. Topologically, residues 482–507 are extracellular; that stretch reads PCWNACTDRSSKLPPNTYSYKVASSA.

Belongs to the major facilitator superfamily. Monocarboxylate porter (TC 2.A.1.13) family.

It is found in the cell membrane. The catalysed reaction is creatine(in) = creatine(out). It carries out the reaction (R)-carnitine(in) = (R)-carnitine(out). Functionally, extracellular pH-and Na(+)-sensitive low-affinity creatine transporter. Also functions as a pH-independent carnitine efflux transporter. The chain is Monocarboxylate transporter 9 (SLC16A9) from Gallus gallus (Chicken).